Consider the following 102-residue polypeptide: Urease subunit beta (102 aa).

Belongs to the urease beta subunit family. In terms of assembly, heterotrimer of UreA (gamma), UreB (beta) and UreC (alpha) subunits. Three heterotrimers associate to form the active enzyme.

The protein localises to the cytoplasm. The enzyme catalyses urea + 2 H2O + H(+) = hydrogencarbonate + 2 NH4(+). It functions in the pathway nitrogen metabolism; urea degradation; CO(2) and NH(3) from urea (urease route): step 1/1. This Pseudomonas savastanoi pv. phaseolicola (strain 1448A / Race 6) (Pseudomonas syringae pv. phaseolicola (strain 1448A / Race 6)) protein is Urease subunit beta.